Reading from the N-terminus, the 266-residue chain is Hydroxyethylthiazole kinase (266 aa).

A substrate-binding site is contributed by Met43. The ATP site is built by Arg119 and Thr166. Gly193 is a substrate binding site.

The protein belongs to the Thz kinase family. Mg(2+) serves as cofactor.

The catalysed reaction is 5-(2-hydroxyethyl)-4-methylthiazole + ATP = 4-methyl-5-(2-phosphooxyethyl)-thiazole + ADP + H(+). The protein operates within cofactor biosynthesis; thiamine diphosphate biosynthesis; 4-methyl-5-(2-phosphoethyl)-thiazole from 5-(2-hydroxyethyl)-4-methylthiazole: step 1/1. Catalyzes the phosphorylation of the hydroxyl group of 4-methyl-5-beta-hydroxyethylthiazole (THZ). The polypeptide is Hydroxyethylthiazole kinase (Methanococcus vannielii (strain ATCC 35089 / DSM 1224 / JCM 13029 / OCM 148 / SB)).